The sequence spans 86 residues: Probable acyl carrier protein CCNA_01221 (86 aa).

Residues 6–83 (TVTDLSLREI…DLSKLINDLR (78 aa)) enclose the Carrier domain. Residue Ser-43 is modified to O-(pantetheine 4'-phosphoryl)serine.

The protein belongs to the acyl carrier protein (ACP) family.

It functions in the pathway lipid metabolism; sphingolipid metabolism. Its function is as follows. Involved in de novo bacterial ceramide synthesis. In Caulobacter vibrioides (strain NA1000 / CB15N) (Caulobacter crescentus), this protein is Probable acyl carrier protein CCNA_01221.